The primary structure comprises 478 residues: Ribosomal RNA small subunit methyltransferase F (478 aa).

S-adenosyl-L-methionine-binding positions include 121–127 (ASAPGSK), Glu145, Asp172, and Asp190. The active-site Nucleophile is the Cys243.

It belongs to the class I-like SAM-binding methyltransferase superfamily. RsmB/NOP family.

It localises to the cytoplasm. It carries out the reaction cytidine(1407) in 16S rRNA + S-adenosyl-L-methionine = 5-methylcytidine(1407) in 16S rRNA + S-adenosyl-L-homocysteine + H(+). Its function is as follows. Specifically methylates the cytosine at position 1407 (m5C1407) of 16S rRNA. This chain is Ribosomal RNA small subunit methyltransferase F, found in Shewanella sediminis (strain HAW-EB3).